Reading from the N-terminus, the 812-residue chain is Lon protease (812 aa).

Residues 22 to 215 enclose the Lon N-terminal domain; it reads YAVLPLRDIV…KALSFMEAEI (194 aa). 367–374 lines the ATP pocket; sequence GPPGVGKT. Residues 602–783 enclose the Lon proteolytic domain; sequence EDQVGVVTGL…GEVLKHALVR (182 aa). Residues Ser-689 and Lys-732 contribute to the active site. The segment at 787-812 is disordered; it reads PIEWTEQENPTAVPPVEDEAGASLAH.

The protein belongs to the peptidase S16 family. In terms of assembly, homohexamer. Organized in a ring with a central cavity.

Its subcellular location is the cytoplasm. It carries out the reaction Hydrolysis of proteins in presence of ATP.. ATP-dependent serine protease that mediates the selective degradation of mutant and abnormal proteins as well as certain short-lived regulatory proteins. Required for cellular homeostasis and for survival from DNA damage and developmental changes induced by stress. Degrades polypeptides processively to yield small peptide fragments that are 5 to 10 amino acids long. Binds to DNA in a double-stranded, site-specific manner. Required for wild-type virulence during the initial stages of infection in the mouse model, but not essential for the establishment and maintenance of chronic infection in this host. This Brucella abortus (strain 2308) protein is Lon protease.